A 450-amino-acid polypeptide reads, in one-letter code: Proline--tRNA ligase (450 aa).

It belongs to the class-II aminoacyl-tRNA synthetase family. ProS type 2 subfamily. In terms of assembly, homodimer.

The protein localises to the cytoplasm. The catalysed reaction is tRNA(Pro) + L-proline + ATP = L-prolyl-tRNA(Pro) + AMP + diphosphate. In terms of biological role, catalyzes the attachment of proline to tRNA(Pro) in a two-step reaction: proline is first activated by ATP to form Pro-AMP and then transferred to the acceptor end of tRNA(Pro). This Paracoccus denitrificans (strain Pd 1222) protein is Proline--tRNA ligase.